We begin with the raw amino-acid sequence, 151 residues long: Transcription elongation factor Spt5 (151 aa).

The 31-residue stretch at 98-128 folds into the KOW domain; it reads PGQVVEIVAGAFKGMKARVIDVNQSKGQVTV.

Belongs to the archaeal Spt5 family. In terms of assembly, heterodimer composed of Spt4 and Spt5. Interacts with RNA polymerase (RNAP).

Its function is as follows. Stimulates transcription elongation. This Aeropyrum pernix (strain ATCC 700893 / DSM 11879 / JCM 9820 / NBRC 100138 / K1) protein is Transcription elongation factor Spt5.